Here is a 138-residue protein sequence, read N- to C-terminus: MRTLWIVAVLLLGVEGSLVQFEMLIMKVAKRSGLFSYSAYGCYCGWGGHGRPQDATDHCCFVHDCCYGKVTDCNPKTASYTYSEENGEIVCGGDDPCKKQVCECDRVAAICFRDNIPTYDNKYWRFPPENCQEEPEPC.

A signal peptide spans 1–16 (MRTLWIVAVLLLGVEG). 7 cysteine pairs are disulfide-bonded: Cys42/Cys131, Cys44/Cys60, Cys59/Cys111, Cys65/Cys138, Cys66/Cys104, Cys73/Cys97, and Cys91/Cys102. Tyr43, Gly45, and Gly47 together coordinate Ca(2+). His63 is a catalytic residue. Asp64 contacts Ca(2+). Residue Asp105 is part of the active site.

It belongs to the phospholipase A2 family. Group II subfamily. D49 sub-subfamily. As to quaternary structure, homodimer. It depends on Ca(2+) as a cofactor. Expressed by the venom gland.

The protein localises to the secreted. The catalysed reaction is a 1,2-diacyl-sn-glycero-3-phosphocholine + H2O = a 1-acyl-sn-glycero-3-phosphocholine + a fatty acid + H(+). Its function is as follows. Snake venom phospholipase A2 (PLA2) that shows very low inhibition of ADP-induced platelet aggregation in platelet-rich plasma of human, rabbit and guinea pig. Shows edema-inducing activity and myotoxicity. PLA2 catalyzes the calcium-dependent hydrolysis of the 2-acyl groups in 3-sn-phosphoglycerides. The sequence is that of Acidic phospholipase A2 CoaPLA2 from Crotalus lutosus abyssus (Grand Canyon rattlesnake).